The following is a 167-amino-acid chain: NAD(P)H-quinone oxidoreductase subunit I, chloroplastic (167 aa).

2 consecutive 4Fe-4S ferredoxin-type domains span residues 55–84 and 95–124; these read GRIHFEFDKCIACEVCVRVCPIDLPVVDWK and LNYSIDFGICIFCGNCVEYCPTNCLSMTEE. [4Fe-4S] cluster-binding residues include cysteine 64, cysteine 67, cysteine 70, cysteine 74, cysteine 104, cysteine 107, cysteine 110, and cysteine 114.

The protein belongs to the complex I 23 kDa subunit family. As to quaternary structure, NDH is composed of at least 16 different subunits, 5 of which are encoded in the nucleus. It depends on [4Fe-4S] cluster as a cofactor.

The protein resides in the plastid. It is found in the chloroplast thylakoid membrane. The enzyme catalyses a plastoquinone + NADH + (n+1) H(+)(in) = a plastoquinol + NAD(+) + n H(+)(out). The catalysed reaction is a plastoquinone + NADPH + (n+1) H(+)(in) = a plastoquinol + NADP(+) + n H(+)(out). NDH shuttles electrons from NAD(P)H:plastoquinone, via FMN and iron-sulfur (Fe-S) centers, to quinones in the photosynthetic chain and possibly in a chloroplast respiratory chain. The immediate electron acceptor for the enzyme in this species is believed to be plastoquinone. Couples the redox reaction to proton translocation, and thus conserves the redox energy in a proton gradient. This is NAD(P)H-quinone oxidoreductase subunit I, chloroplastic from Lepidium virginicum (Virginia pepperweed).